A 122-amino-acid polypeptide reads, in one-letter code: Large ribosomal subunit protein uL14 (122 aa).

This sequence belongs to the universal ribosomal protein uL14 family. In terms of assembly, part of the 50S ribosomal subunit. Forms a cluster with proteins L3 and L19. In the 70S ribosome, L14 and L19 interact and together make contacts with the 16S rRNA in bridges B5 and B8.

Binds to 23S rRNA. Forms part of two intersubunit bridges in the 70S ribosome. The protein is Large ribosomal subunit protein uL14 of Acaryochloris marina (strain MBIC 11017).